The sequence spans 679 residues: Membrane-spanning 4-domains subfamily A member 14 (679 aa).

The next 4 helical transmembrane spans lie at 50-70, 76-96, 110-130, and 141-161; these read ILLA…YIGF, LVVL…TGYL, VTGM…FTIL, and MPSF…LFFL. Disordered regions lie at residues 218–259, 331–363, 469–491, and 505–633; these read VSQP…EKKP, SEQT…ILSQ, KEWK…LNQQ, and VQAK…QAQV. Residues 224–234 show a composition bias toward basic and acidic residues; the sequence is KGREFVPDEQK. Over residues 337–348 the composition is skewed to low complexity; it reads SKSTSSHVKQSS. Residues 469–478 are compositionally biased toward basic and acidic residues; sequence KEWKSEEELH. Composition is skewed to polar residues over residues 519-535 and 550-563; these read DQQS…SLDQ and KQAQ…QLPD. A compositionally biased stretch (basic and acidic residues) spans 580 to 601; sequence QSKDGQVKDQQTDKEQNSKKQT. Residues 619–632 are compositionally biased toward polar residues; that stretch reads GQFQNVQAEGQQAQ.

Belongs to the MS4A family.

The protein resides in the membrane. In terms of biological role, may be involved in signal transduction as a component of a multimeric receptor complex. The chain is Membrane-spanning 4-domains subfamily A member 14 (MS4A14) from Homo sapiens (Human).